We begin with the raw amino-acid sequence, 29 residues long: Galanin (29 aa).

Thr29 is subject to Threonine amide.

This sequence belongs to the galanin family.

The protein localises to the secreted. In terms of biological role, contracts smooth muscle of the gastrointestinal and genitourinary tract, regulates growth hormone release, modulates insulin release, and may be involved in the control of adrenal secretion. The protein is Galanin (GAL) of Gallus gallus (Chicken).